Here is a 144-residue protein sequence, read N- to C-terminus: Large ribosomal subunit protein uL15 (144 aa).

The tract at residues 1–52 (MRLNTLSPAEGAKHAPKRVGRGIGSGLGKTAGRGHKGQNSRSGGGVRRGFEG) is disordered. The span at 21 to 31 (RGIGSGLGKTA) shows a compositional bias: gly residues.

The protein belongs to the universal ribosomal protein uL15 family. As to quaternary structure, part of the 50S ribosomal subunit.

In terms of biological role, binds to the 23S rRNA. This chain is Large ribosomal subunit protein uL15, found in Yersinia enterocolitica serotype O:8 / biotype 1B (strain NCTC 13174 / 8081).